A 217-amino-acid polypeptide reads, in one-letter code: MSEPMMWLLVRGVWETLAMTFVSGFFGFVIGLPVGVLLYVTRPGQIIANAKLYRTVSAIVNIFRSIPFIILLVWMIPFTRVIVGTSIGLQAAIVPLTVGAAPFIARMVENALLEIPTGLIEASRAMGATPMQIVRKVLLPEALPGLVNAATITLITLVGYSAMGGAVGAGGLGQIGYQYGYIGYNATVMNTVLVLLVILVYLIQFAGDRIVRAVTRK.

Topologically, residues 1 to 19 (MSEPMMWLLVRGVWETLAM) are periplasmic. The region spanning 13–204 (VWETLAMTFV…LLVILVYLIQ (192 aa)) is the ABC transmembrane type-1 domain. Residues 20-40 (TFVSGFFGFVIGLPVGVLLYV) traverse the membrane as a helical segment. At 41-57 (TRPGQIIANAKLYRTVS) the chain is on the cytoplasmic side. The chain crosses the membrane as a helical span at residues 58-78 (AIVNIFRSIPFIILLVWMIPF). At 79–80 (TR) the chain is on the periplasmic side. The chain crosses the membrane as a helical span at residues 81–101 (VIVGTSIGLQAAIVPLTVGAA). Residues 102–151 (PFIARMVENALLEIPTGLIEASRAMGATPMQIVRKVLLPEALPGLVNAAT) lie on the Cytoplasmic side of the membrane. The chain crosses the membrane as a helical span at residues 152–172 (ITLITLVGYSAMGGAVGAGGL). The Periplasmic portion of the chain corresponds to 173-185 (GQIGYQYGYIGYN). Residues 186 to 206 (ATVMNTVLVLLVILVYLIQFA) form a helical membrane-spanning segment. Topologically, residues 207–217 (GDRIVRAVTRK) are cytoplasmic.

Belongs to the binding-protein-dependent transport system permease family. CysTW subfamily.

It localises to the cell inner membrane. Part of the binding-protein-dependent transport system for D-methionine and the toxic methionine analog alpha-methyl-methionine. Probably responsible for the translocation of the substrate across the membrane. Functionally, (Microbial infection) Probably transports the toxic C-terminal region of CdiA from E.coli strain MHI813 across the inner membrane to the cytoplasm, where CdiA has a toxic effect. Toxin transport is strain-specific, mutations in this gene do not confer resistance to several other tested CdiA toxins. The protein is D-methionine transport system permease protein MetI (metI) of Escherichia coli (strain K12).